The primary structure comprises 236 residues: MSPDLDTPLIIALDYPRLDQALAMAERLDPSRCRVKVGKELFTRTGPRVLEALHGLGFEVFLDLKFHDIPNTVAGAVEAAADHGVWMVNVHAGGGRRMMEAARERLERRRLGTHLIAVTVLTSMERDDLIEVGVEAEPLSQVERLARLAQQSGMAGVVCSAQEAAALRATCGDDFLKVTPGIRPRASSADDQRRTLTPGEAMAAGSTHLVVGRPVTQAPDPMAALATIERELAEPS.

Residues D14, K36, 63-72 (DLKFHDIPNT), T122, R183, Q192, G212, and R213 each bind substrate. The active-site Proton donor is the K65.

It belongs to the OMP decarboxylase family. Type 1 subfamily. Homodimer.

It catalyses the reaction orotidine 5'-phosphate + H(+) = UMP + CO2. It functions in the pathway pyrimidine metabolism; UMP biosynthesis via de novo pathway; UMP from orotate: step 2/2. Its function is as follows. Catalyzes the decarboxylation of orotidine 5'-monophosphate (OMP) to uridine 5'-monophosphate (UMP). This Chromohalobacter salexigens (strain ATCC BAA-138 / DSM 3043 / CIP 106854 / NCIMB 13768 / 1H11) protein is Orotidine 5'-phosphate decarboxylase.